The chain runs to 132 residues: Guanyl-specific ribonuclease C2 (132 aa).

Positions 1–26 are cleaved as a signal peptide; sequence MLYNKLITIAALLVPALAAPQGLDVR. Cystine bridges form between Cys28–Cys36 and Cys32–Cys129. The active site involves His66. Residue Glu84 is the Proton acceptor of the active site. His118 (proton donor) is an active-site residue.

It belongs to the ribonuclease N1/T1 family.

Its subcellular location is the secreted. The catalysed reaction is [RNA] containing guanosine + H2O = an [RNA fragment]-3'-guanosine-3'-phosphate + a 5'-hydroxy-ribonucleotide-3'-[RNA fragment].. The polypeptide is Guanyl-specific ribonuclease C2 (Aspergillus clavatus (strain ATCC 1007 / CBS 513.65 / DSM 816 / NCTC 3887 / NRRL 1 / QM 1276 / 107)).